A 259-amino-acid chain; its full sequence is Protein unc-50 homolog (259 aa).

Over residues M1–L15 the composition is skewed to polar residues. Residues M1 to R22 are disordered. At M1–P80 the chain is on the cytoplasmic side. A helical transmembrane segment spans residues A81 to L101. Over D102 to T110 the chain is Lumenal. The helical transmembrane segment at L111 to M131 threads the bilayer. The Cytoplasmic segment spans residues W132–F162. A helical transmembrane segment spans residues Y163 to I183. Over S184–W198 the chain is Lumenal. The helical transmembrane segment at L199 to L219 threads the bilayer. The Cytoplasmic portion of the chain corresponds to K220–T222. Residues V223–G243 form a helical membrane-spanning segment. The Lumenal portion of the chain corresponds to W244–Q259.

The protein belongs to the unc-50 family.

The protein localises to the nucleus inner membrane. The protein resides in the golgi apparatus membrane. Its function is as follows. Involved in the cell surface expression of neuronal nicotinic receptors. Binds RNA. The chain is Protein unc-50 homolog (unc50) from Danio rerio (Zebrafish).